A 103-amino-acid chain; its full sequence is Small ribosomal subunit protein uS10 (103 aa).

Positions 35-59 (LSGPVPLPTKTLEVPSRKSPDGEGT) are disordered.

This sequence belongs to the universal ribosomal protein uS10 family. As to quaternary structure, part of the 30S ribosomal subunit.

In terms of biological role, involved in the binding of tRNA to the ribosomes. The chain is Small ribosomal subunit protein uS10 (rps10) from Haloarcula marismortui (strain ATCC 43049 / DSM 3752 / JCM 8966 / VKM B-1809) (Halobacterium marismortui).